The chain runs to 275 residues: uncharacterized protein (275 aa).

Disordered stretches follow at residues 1 to 25 and 185 to 275; these read MIGGERVLLGSQKREPSNEEDDQEQ and QRGE…RHHM. Basic and acidic residues predominate over residues 228–239; sequence KPGDGEENAKDD.

This is an uncharacterized protein from Neurospora crassa (strain ATCC 24698 / 74-OR23-1A / CBS 708.71 / DSM 1257 / FGSC 987).